The following is a 701-amino-acid chain: Polyribonucleotide nucleotidyltransferase (701 aa).

The Mg(2+) site is built by D487 and D493. A KH domain is found at P554–V613. Positions G623–K691 constitute an S1 motif domain.

Belongs to the polyribonucleotide nucleotidyltransferase family. In terms of assembly, component of the RNA degradosome, which is a multiprotein complex involved in RNA processing and mRNA degradation. The cofactor is Mg(2+).

Its subcellular location is the cytoplasm. The catalysed reaction is RNA(n+1) + phosphate = RNA(n) + a ribonucleoside 5'-diphosphate. Functionally, involved in mRNA degradation. Catalyzes the phosphorolysis of single-stranded polyribonucleotides processively in the 3'- to 5'-direction. The protein is Polyribonucleotide nucleotidyltransferase of Pseudomonas aeruginosa (strain LESB58).